A 209-amino-acid polypeptide reads, in one-letter code: Eukaryotic translation initiation factor isoform 4E-2 (209 aa).

A disordered region spans residues 1–29; that stretch reads MAEVEAALPVAATETPEVAAEGDAGAAEA. Residues 9–29 show a composition bias toward low complexity; that stretch reads PVAATETPEVAAEGDAGAAEA. MRNA is bound by residues 51–56, K83, and 101–102; these read PGAAWG and WE. A disulfide bridge connects residues C106 and C145. MRNA contacts are provided by residues 152–157 and 197–200; these read RQRQDK and RSQK.

This sequence belongs to the eukaryotic initiation factor 4E family. EIF4F is a multi-subunit complex, the composition of which varies with external and internal environmental conditions. It is composed of at least EIF4A, EIF4E and EIF4G. EIF4E is also known to interact with other partners. In higher plants two isoforms of EIF4F have been identified, named isoform EIF4F and isoform EIF(iso)4F. Isoform EIF4F has subunits p220 and p26, whereas isoform EIF(iso)4F has subunits p82 and p28. In terms of processing, according to the redox status, the Cys-106-Cys-145 disulfide bridge may have a role in regulating protein function by affecting its ability to bind capped mRNA.

The protein localises to the cytoplasm. The protein resides in the nucleus. Functionally, component of the protein complex eIF4F, which is involved in the recognition of the mRNA cap, ATP-dependent unwinding of 5'-terminal secondary structure and recruitment of mRNA to the ribosome. Recognizes and binds the 7-methylguanosine-containing mRNA cap during an early step in the initiation of protein synthesis and facilitates ribosome binding by inducing the unwinding of the mRNAs secondary structures. The chain is Eukaryotic translation initiation factor isoform 4E-2 from Triticum aestivum (Wheat).